Consider the following 217-residue polypeptide: Thiopurine S-methyltransferase (217 aa).

S-adenosyl-L-methionine contacts are provided by W11, L46, E67, and R122.

It belongs to the class I-like SAM-binding methyltransferase superfamily. TPMT family.

Its subcellular location is the cytoplasm. It carries out the reaction S-adenosyl-L-methionine + a thiopurine = S-adenosyl-L-homocysteine + a thiopurine S-methylether.. This Vibrio atlanticus (strain LGP32) (Vibrio splendidus (strain Mel32)) protein is Thiopurine S-methyltransferase.